We begin with the raw amino-acid sequence, 710 residues long: DNA ligase (710 aa).

Residues 53–57 (DAEYD), 102–103 (SL), and Glu-136 contribute to the NAD(+) site. The N6-AMP-lysine intermediate role is filled by Lys-138. Positions 159, 196, 312, and 336 each coordinate NAD(+). Zn(2+) is bound by residues Cys-429, Cys-432, Cys-453, and Cys-459. In terms of domain architecture, BRCT spans 633 to 710 (ETSSPVAGKT…DEDQWIELAG (78 aa)).

Belongs to the NAD-dependent DNA ligase family. LigA subfamily. Requires Mg(2+) as cofactor. It depends on Mn(2+) as a cofactor.

The catalysed reaction is NAD(+) + (deoxyribonucleotide)n-3'-hydroxyl + 5'-phospho-(deoxyribonucleotide)m = (deoxyribonucleotide)n+m + AMP + beta-nicotinamide D-nucleotide.. Functionally, DNA ligase that catalyzes the formation of phosphodiester linkages between 5'-phosphoryl and 3'-hydroxyl groups in double-stranded DNA using NAD as a coenzyme and as the energy source for the reaction. It is essential for DNA replication and repair of damaged DNA. The protein is DNA ligase of Parvibaculum lavamentivorans (strain DS-1 / DSM 13023 / NCIMB 13966).